Consider the following 529-residue polypeptide: Na(+)/H(+) antiporter NhaB (529 aa).

The next 12 membrane-spanning stretches (helical) occupy residues F13 to P33, I34 to F54, L90 to M110, L113 to L133, C136 to I156, L205 to P225, F241 to F261, G306 to I326, G327 to G347, E351 to I371, A451 to I471, and V479 to F499.

Belongs to the NhaB Na(+)/H(+) (TC 2.A.34) antiporter family.

The protein resides in the cell inner membrane. The catalysed reaction is 2 Na(+)(in) + 3 H(+)(out) = 2 Na(+)(out) + 3 H(+)(in). In terms of biological role, na(+)/H(+) antiporter that extrudes sodium in exchange for external protons. The sequence is that of Na(+)/H(+) antiporter NhaB from Vibrio vulnificus (strain CMCP6).